We begin with the raw amino-acid sequence, 70 residues long: Small ribosomal subunit protein bS21 (70 aa).

This sequence belongs to the bacterial ribosomal protein bS21 family.

This Polaromonas naphthalenivorans (strain CJ2) protein is Small ribosomal subunit protein bS21.